A 362-amino-acid polypeptide reads, in one-letter code: GTP 3',8-cyclase (362 aa).

The Radical SAM core domain maps to 8 to 228; that stretch reads SLGRPLRDLR…ARISSHWPID (221 aa). GTP is bound at residue arginine 17. Positions 24 and 28 each coordinate [4Fe-4S] cluster. Residue tyrosine 30 coordinates S-adenosyl-L-methionine. Cysteine 31 contributes to the [4Fe-4S] cluster binding site. Residue arginine 71 participates in GTP binding. S-adenosyl-L-methionine is bound at residue glycine 75. Residue threonine 102 participates in GTP binding. An S-adenosyl-L-methionine-binding site is contributed by serine 126. Lysine 164 contributes to the GTP binding site. Position 198 (methionine 198) interacts with S-adenosyl-L-methionine. Cysteine 262 and cysteine 265 together coordinate [4Fe-4S] cluster. 267-269 provides a ligand contact to GTP; sequence RLR. Residue cysteine 279 coordinates [4Fe-4S] cluster. Residues 325–362 are disordered; sequence ALDSDGSREDADESEASAVPGRSTHPGHRKVEMSYIGG.

It belongs to the radical SAM superfamily. MoaA family. As to quaternary structure, monomer and homodimer. It depends on [4Fe-4S] cluster as a cofactor.

It catalyses the reaction GTP + AH2 + S-adenosyl-L-methionine = (8S)-3',8-cyclo-7,8-dihydroguanosine 5'-triphosphate + 5'-deoxyadenosine + L-methionine + A + H(+). It participates in cofactor biosynthesis; molybdopterin biosynthesis. Functionally, catalyzes the cyclization of GTP to (8S)-3',8-cyclo-7,8-dihydroguanosine 5'-triphosphate. In Acidothermus cellulolyticus (strain ATCC 43068 / DSM 8971 / 11B), this protein is GTP 3',8-cyclase.